A 214-amino-acid chain; its full sequence is Dynein axonemal assembly factor 6 (214 aa).

Disordered regions lie at residues 1–22 and 34–68; these read MESE…QNVD and ALSK…NIGP.

It belongs to the PIH1 family. As to quaternary structure, interacts with HSPA1A/B and HSP90AA1. Interacts with DNAAF2 and DNAAF4. Interacts wuth DNAI2. As to expression, expressed in testis, small intestine, prostate, adrenal gland, spleen, lung, bladder, breast and ovary. Expressed in ciliated epithelial cells.

The protein resides in the cytoplasm. It localises to the golgi apparatus. The protein localises to the trans-Golgi network. Functionally, plays a role in cytoplasmic pre-assembly of axonemal dynein. The chain is Dynein axonemal assembly factor 6 from Homo sapiens (Human).